Reading from the N-terminus, the 208-residue chain is Proheparin-binding EGF-like growth factor (208 aa).

Positions 1-23 (MKLLPSVVLKLFLAAVFSALVTG) are cleaved as a signal peptide. Positions 24–62 (ESLERLRRGLADGTSNLVSPTESTDQLLPPGGGRGREVL) are excised as a propeptide. Residues 24–161 (ESLERLRRGL…NRLYTYDHTT (138 aa)) lie on the Extracellular side of the membrane. The segment covering 37–49 (TSNLVSPTESTDQ) has biased composition (polar residues). Disordered stretches follow at residues 37 to 57 (TSNLVSPTESTDQLLPPGGGR) and 81 to 104 (QALATPSKEERGKRKKKGKGLGKK). O-linked (GalNAc...) threonine glycosylation is present at threonine 85. Positions 93–102 (KRKKKGKGLG) are enriched in basic residues. Positions 104 to 144 (KRDPCLRKYKDFCIHGECKYVKELRAPSCICHPGYHGERCH) constitute an EGF-like domain. Intrachain disulfides connect cysteine 108–cysteine 121, cysteine 116–cysteine 132, and cysteine 134–cysteine 143. The propeptide at 149–208 (PVKNRLYTYDHTTILAVVAVVLSSVCLLVIVGLLMFRYHRRGGYDVENEEKVKLGVTASH) is C-terminal. Residues 162–182 (ILAVVAVVLSSVCLLVIVGLL) form a helical membrane-spanning segment. Residues 183–208 (MFRYHRRGGYDVENEEKVKLGVTASH) are Cytoplasmic-facing.

Interacts with FBLN1. Interacts with EGFR and ERBB4. In terms of processing, O-glycosylated. In terms of tissue distribution, macrophages, midbrain, cerebellum, hypothalamus, cerebral cortex, bulbourethral gland, lung, heart ventricle, kidney, skin, prostate, seminal vesicle, testis; at low levels in lymph node, thymus, spleen; not detected in pituitary, olfactory bulb, thyroid, duodenum, pancreas, liver, submaxillary gland.

It is found in the secreted. The protein localises to the extracellular space. Its subcellular location is the cell membrane. In terms of biological role, growth factor that mediates its effects via EGFR, ERBB2 and ERBB4. Required for normal cardiac valve formation and normal heart function. Promotes smooth muscle cell proliferation. May be involved in macrophage-mediated cellular proliferation. It is mitogenic for fibroblasts, but not endothelial cells. It is able to bind EGF receptor/EGFR with higher affinity than EGF itself and is a far more potent mitogen for smooth muscle cells than EGF. Also acts as a diphtheria toxin receptor. This is Proheparin-binding EGF-like growth factor (HBEGF) from Sus scrofa (Pig).